A 451-amino-acid polypeptide reads, in one-letter code: KNR4/SMI1 homolog 1 (451 aa).

Over residues 410–422 (ENQIAGGSDNAKN) the composition is skewed to polar residues. A disordered region spans residues 410–451 (ENQIAGGSDNAKNQVKLGETSDTKQDDTSKIASTVSTSDEDE). Basic and acidic residues predominate over residues 428–438 (ETSDTKQDDTS). Polar residues predominate over residues 439–451 (KIASTVSTSDEDE).

Belongs to the KNR4/SMI1 family.

This is KNR4/SMI1 homolog 1 from Debaryomyces hansenii (strain ATCC 36239 / CBS 767 / BCRC 21394 / JCM 1990 / NBRC 0083 / IGC 2968) (Yeast).